Reading from the N-terminus, the 292-residue chain is MDLPRLYVPATLANLGSGFDALGVALDLYLEVEAHPAPEDAFLYEGEGHVEGTDNLIHEGYRAGMRALGLEPFPLRVRAFNPIPLARGMGSSSAALVAGVALADRLSGGRLGREGVFRVAAGLEGHPDNVAPAVYGGFVAALSDPPLAIPLPRPEGVRFVLAVPPYEVPTPLAREALPREVPLEDAIYNLARSALWPAALSSGRLEALREACRDRLHQPHRAHLMPGVLEAIEGALEAGALAAFVGGAGPTLAALARAGEEAPVIRALSAYRGPEGRTLVLGIGEGYFWKET.

Residue 84 to 94 (PLARGMGSSSA) participates in ATP binding.

It belongs to the GHMP kinase family. Homoserine kinase subfamily.

The protein resides in the cytoplasm. The catalysed reaction is L-homoserine + ATP = O-phospho-L-homoserine + ADP + H(+). Its pathway is amino-acid biosynthesis; L-threonine biosynthesis; L-threonine from L-aspartate: step 4/5. In terms of biological role, catalyzes the ATP-dependent phosphorylation of L-homoserine to L-homoserine phosphate. This chain is Homoserine kinase, found in Thermus thermophilus (strain ATCC 27634 / DSM 579 / HB8).